The following is a 253-amino-acid chain: Ribosome maturation factor RimP (253 aa).

Over residues 186 to 199 the composition is skewed to basic and acidic residues; sequence RRGKAAEREKKRDL. The tract at residues 186 to 253 is disordered; that stretch reads RRGKAAEREK…RARRGEIDPD (68 aa). A compositionally biased stretch (low complexity) spans 201-216; the sequence is LAPPLAPHAKPAAQAK. Positions 240 to 253 are enriched in basic and acidic residues; the sequence is LAADRARRGEIDPD.

Belongs to the RimP family.

The protein resides in the cytoplasm. In terms of biological role, required for maturation of 30S ribosomal subunits. This Bradyrhizobium sp. (strain BTAi1 / ATCC BAA-1182) protein is Ribosome maturation factor RimP.